Consider the following 624-residue polypeptide: Forkhead box protein O1 (624 aa).

Disordered regions lie at residues 1 to 62 (MAEA…PSAS) and 94 to 128 (APLSQHPPVPPAAAAAAAGGQLAGQPRKSSSSRRN). Position 24 is a phosphothreonine; by PKB/AKT1 or PKB/AKT2 and SGK1 (T24). Low complexity-rich tracts occupy residues 37–62 (SATSSPAPSGGAAANPDGAAGLPSAS) and 105–119 (AAAAAAAGGQLAGQP). The segment at residues 130 to 224 (WGNLSYADLI…KSGKSPRRRA (95 aa)) is a DNA-binding region (fork-head). 2 DNA-binding regions span residues 181-188 (NSIRHNLS) and 204-207 (SSWW). At S182 the chain carries Phosphoserine; by STK4/MST1. Phosphoserine is present on residues S188, S204, and S205. The tract at residues 204–306 (SSWWMLNPEG…RLSPIMTEQD (103 aa)) is disordered. An N6-acetyllysine mark is found at K215 and K218. S219 carries the post-translational modification Phosphoserine; by CDK1. Residues R221 and R223 each carry the omega-N-methylarginine; by PRMT1 modification. The Nuclear localization signal motif lies at 221 to 223 (RRR). S226 is modified (phosphoserine; by PKB/AKT1 and SGK1). Residues K232, K235, and K244 each carry the N6-acetyllysine modification. Over residues 234 to 245 (AKSRGRAAKKKA) the composition is skewed to basic residues. Residues 253-532 (GAGDSPGSQF…RLAPVKTALQ (280 aa)) form a sufficient for interaction with NLK region. A phosphoserine mark is found at S257 and S268. Polar residues predominate over residues 279-296 (NWSTFRPRTSSNASTISG). S289 carries the post-translational modification Phosphoserine; by PKB/AKT1. A Phosphoserine; by CK1 and SGK1 modification is found at S292. S295 carries the phosphoserine; by CK1 modification. S299 carries the post-translational modification Phosphoserine; by DYRK1A. T303 bears the Phosphothreonine mark. The segment at 333–428 (SEISNPENME…YGGMSQYCAP (96 aa)) is required for interaction with RUNX2. The residue at position 393 (K393) is an N6-acetyllysine. A Required for interaction with SIRT1 motif is present at residues 431-435 (LKELL).

In terms of assembly, interacts with LRPPRC. Interacts with RUNX2; the interaction inhibits RUNX2 transcriptional activity and mediates the IGF1/insulin-dependent BGLAP expression in osteoblasts Interacts with PPP2R1A; the interaction regulates the dephosphorylation of FOXO1 at Thr-24 and Ser-263 leading to its nuclear import. Interacts with NLK. Interacts with SIRT1; the interaction results in the deacetylation of FOXO1 leading to activation of FOXO1-mediated transcription of genes involved in DNA repair and stress resistance. Binds to CDK1. Interacts with the 14-3-3 proteins, YWHAG and YWHAZ; the interactions require insulin-stimulated phosphorylation on Thr-24, promote nuclear exit and loss of transcriptional activity. Interacts with SKP2; the interaction ubiquitinates FOXO1 leading to its proteasomal degradation. The interaction requires the presence of KRIT1. Interacts (via the C-terminal half) with ATF4 (via its DNA binding domain); the interaction occurs in osteoblasts, regulates glucose homeostasis via suppression of beta-cell proliferation and subsequent decrease in insulin production. Interacts with PRMT1; the interaction methylates FOXO1, prevents PKB/AKT1 phosphorylation and retains FOXO1 in the nucleus. Interacts with EP300 and CREBBP; the interactions acetylate FOXO1. Interacts with SIRT2; the interaction is disrupted in response to oxidative stress or serum deprivation, leading to increased level of acetylated FOXO1, which promotes stress-induced autophagy by stimulating E1-like activating enzyme ATG7. Interacts (acetylated form) with ATG7; the interaction is increased in response to oxidative stress or serum deprivation and promotes the autophagic process leading to cell death. Interacts (acetylated form) with PPARG. Interacts with XBP1; this interaction is direct and leads to FOXO1 ubiquitination and degradation via the proteasome pathway. Interacts (via the Fork-head domain) with CEBPA; the interaction increases when FOXO1 is deacetylated. Interacts with WDFY2. Forms a complex with WDFY2 and AKT1. Interacts with CRY1. Interacts with PPIA/CYPA; the interaction promotes FOXO1 dephosphorylation, nuclear accumulation and transcriptional activity. Interacts with TOX4; FOXO1 is required for full induction of TOX4-dependent activity and the interaction is inhibited by insulin. Interacts (when phosphorylated on Ser-226) with STUB1/CHIP. Post-translationally, phosphorylation by NLK promotes nuclear export and inhibits the transcriptional activity. In response to growth factors, phosphorylation on Thr-24, Ser-226 and Ser-292 by PKB/AKT1 promotes nuclear export and inactivation of transactivational activity. Phosphorylation on Thr-24 is required for binding 14-3-3 proteins. Phosphorylation of Ser-226 decreases DNA-binding activity and promotes the phosphorylation of Thr-24 and Ser-289, permitting phosphorylation of Ser-292 and Ser-295, probably by CDK1, leading to nuclear exclusion and loss of function. Stress signals, such as response to oxygen or nitric oxide, attenuate the PKB/AKT1-mediated phosphorylation leading to nuclear retention. Phosphorylation of Ser-299 is independent of IGF1 and leads to reduced function. Dephosphorylated on Thr-24 and Ser-226 by PP2A in beta-cells under oxidative stress leading to nuclear retention. Phosphorylation of Ser-219 by CDK1 disrupts binding of 14-3-3 proteins leading to nuclear accumulation and has no effect on DNA binding nor transcriptional activity. Phosphorylation by STK4/MST1 on Ser-182, upon oxidative stress, inhibits binding to 14-3-3 proteins and nuclear export. PPIA/CYPA promotes its dephosphorylation on Ser-226. Ubiquitinated by SKP2. Ubiquitination leads to proteasomal degradation. Ubiquitinated by STUB1/CHIP; when Ser-226 is phosphorylated. In terms of processing, methylation inhibits AKT1-mediated phosphorylation at Ser-226 and is increased by oxidative stress. Post-translationally, acetylated. Acetylation at Lys-232 and Lys-244 are necessary for autophagic cell death induction. Deacetylated by SIRT2 in response to oxidative stress or serum deprivation, thereby negatively regulating FOXO1-mediated autophagic cell death. Once in the nucleus, acetylated by CREBBP/EP300. Acetylation diminishes the interaction with target DNA and attenuates the transcriptional activity. It increases the phosphorylation at Ser-226. Deacetylation by SIRT1 results in reactivation of the transcriptional activity. Oxidative stress by hydrogen peroxide treatment appears to promote deacetylation and uncoupling of insulin-induced phosphorylation. By contrast, resveratrol acts independently of acetylation. Acetylated at Lys-393, promoting its localization to the nucleus and transcription factor activity. Deacetylation at Lys-393 by SIRT6, promotes its translocation into the cytoplasm, preventing its transcription factor activity. Deacetylation and subsequent inhibition by SIRT6 has different effects depending on cell types: it inhibits gluconeogenesis in hepatocytes, promotes glucose sensing in pancreatic beta-cells and regulates lipid catabolism in brown adipocytes.

It localises to the cytoplasm. Its subcellular location is the nucleus. Functionally, transcription factor that is the main target of insulin signaling and regulates metabolic homeostasis in response to oxidative stress. Binds to the insulin response element (IRE) with consensus sequence 5'-TT[G/A]TTTTG-3' and the related Daf-16 family binding element (DBE) with consensus sequence 5'-TT[G/A]TTTAC-3'. Activity suppressed by insulin. Main regulator of redox balance and osteoblast numbers and controls bone mass. Orchestrates the endocrine function of the skeleton in regulating glucose metabolism. Also acts as a key regulator of chondrogenic commitment of skeletal progenitor cells in response to lipid availability: when lipids levels are low, translocates to the nucleus and promotes expression of SOX9, which induces chondrogenic commitment and suppresses fatty acid oxidation. Acts synergistically with ATF4 to suppress osteocalcin/BGLAP activity, increasing glucose levels and triggering glucose intolerance and insulin insensitivity. Also suppresses the transcriptional activity of RUNX2, an upstream activator of osteocalcin/BGLAP. Acts as an inhibitor of glucose sensing in pancreatic beta cells by acting as a transcription repressor and suppressing expression of PDX1. In hepatocytes, promotes gluconeogenesis by acting together with PPARGC1A and CEBPA to activate the expression of genes such as IGFBP1, G6PC1 and PCK1. Also promotes gluconeogenesis by directly promoting expression of PPARGC1A and G6PC1. Important regulator of cell death acting downstream of CDK1, PKB/AKT1 and STK4/MST1. Promotes neural cell death. Mediates insulin action on adipose tissue. Regulates the expression of adipogenic genes such as PPARG during preadipocyte differentiation and, adipocyte size and adipose tissue-specific gene expression in response to excessive calorie intake. Regulates the transcriptional activity of GADD45A and repair of nitric oxide-damaged DNA in beta-cells. Required for the autophagic cell death induction in response to starvation or oxidative stress in a transcription-independent manner. Mediates the function of MLIP in cardiomyocytes hypertrophy and cardiac remodeling. Positive regulator of apoptosis in cardiac smooth muscle cells as a result of its transcriptional activation of pro-apoptotic genes. Regulates endothelial cell (EC) viability and apoptosis in a PPIA/CYPA-dependent manner via transcription of CCL2 and BCL2L11 which are involved in EC chemotaxis and apoptosis. The protein is Forkhead box protein O1 (FOXO1) of Bos taurus (Bovine).